The following is a 157-amino-acid chain: Protein UXT (157 aa).

This sequence belongs to the UXT family. Homohexamer. Component of the PAQosome complex which is responsible for the biogenesis of several protein complexes and which consists of R2TP complex members RUVBL1, RUVBL2, RPAP3 and PIH1D1, URI complex members PFDN2, PFDN6, PDRG1, UXT and URI1 as well as ASDURF, POLR2E and DNAAF10/WDR92. Interacts with LRPPRC. Interacts with androgen receptor AR (via N-terminus). Interacts with estrogen receptor ESR1; the interaction relocalizes ESR1 to the cytoplasm. In the nucleus, interacts specifically with RELA (via RHD domain) and forms a dynamic complex with NF-kappa-B and is recruited to the NF-kappa-B enhanceosome upon stimulation. Interacts with MECOM. Interacts with URI1.

The protein resides in the cytoplasm. Its subcellular location is the nucleus. It is found in the cytoskeleton. It localises to the microtubule organizing center. The protein localises to the centrosome. The protein resides in the spindle pole. Functionally, involved in gene transcription regulation. Acts in concert with the corepressor URI1 to regulate androgen receptor AR-mediated transcription. Together with URI1, associates with chromatin to the NKX3-1 promoter region. Negatively regulates the transcriptional activity of the estrogen receptor ESR1 by inducing its translocation into the cytoplasm. May act as nuclear chaperone that facilitates the formation of the NF-kappa-B enhanceosome and thus positively regulates NF-kappa-B transcription activity. Potential component of mitochondrial-associated LRPPRC, a multidomain organizer that potentially integrates mitochondria and the microtubular cytoskeleton with chromosome remodeling. Increasing concentrations of UXT contributes to progressive aggregation of mitochondria and cell death potentially through its association with LRPPRC. Suppresses cell transformation and it might mediate this function by interaction and inhibition of the biological activity of cell proliferation and survival stimulatory factors like MECOM. The sequence is that of Protein UXT (Uxt) from Rattus norvegicus (Rat).